The sequence spans 348 residues: Short-chain dehydrogenase fogG (348 aa).

NADP(+) is bound by residues Leu51, Arg75, Asp100, and Asn126. Catalysis depends on proton donor residues Ser180 and Tyr215. NADP(+) is bound by residues Tyr215 and Lys219. Lys219 functions as the Lowers pKa of active site Tyr in the catalytic mechanism.

It belongs to the short-chain dehydrogenases/reductases (SDR) family.

It functions in the pathway secondary metabolite biosynthesis. In terms of biological role, short-chain dehydrogenase; part of the gene cluster that mediates the biosynthesis of flavoglaucin and congeners (including aspergin, dihydroauroglaucin and auroglaucin), prenylated salicylaldehyde derivatives carrying a saturated or an unsaturated C-7 side chain. The PKS fogA releases the carboxylic acid (8E,10E,12E)-3,5,7-trihydroxytetradeca-8,10,12-trienoic acid as its product, as well as derivatives with one and two double bonds. FogA is indeed able to reduce the initial triketide, thus being at least partially responsible for the differently saturated heptyl side chains of flavoglaucin congeners. The oxidoreductases fogB, fogC and fogD modify the nascent polyketide in fogA-bound form and, together, fogA, fogB, fogC and fogD are necessary for the formation of the aromatic core and the cyclized PKS products are released as salicyl alcohols. In particular, fogB is responsible for oxidation of a hydroxyl group or reduction of remaining double bond(s) at the C-7 residue whereas fogD is probably involved in the reductive release of the modified PKS products. The cytochrome P450 monooxygenase fogE is then responsible for the hydroxylation at C-3 of the benzene ring. The fogE products are substrates of the prenyltransferase fogH and the prenylated benzyl alcohols are subsequently oxidized by the fogF to produce the final aryl aldehydes flavoglaucin and congeners. The short-chain dehydrogenase fogG does not seem to be involved in the biosynthesis of the prenylated salicylaldehyde derivatives. The chain is Short-chain dehydrogenase fogG from Aspergillus ruber (strain CBS 135680).